Consider the following 159-residue polypeptide: Na(+)/H(+) antiporter subunit E1 (159 aa).

4 consecutive transmembrane segments (helical) span residues 1-21, 27-47, 60-80, and 101-121; these read MAIQFVINLLVSVIWLLVTNS, FVLGFILGLFLVYLLHRVLPG, LIITFLTELIKANFGVLKIIL, and WQLVLLSNLITLTPGTVVLGI.

Belongs to the CPA3 antiporters (TC 2.A.63) subunit E family. In terms of assembly, may form a heterooligomeric complex that consists of seven subunits: mnhA1, mnhB1, mnhC1, mnhD1, mnhE1, mnhF1 and mnhG1.

The protein resides in the cell membrane. In terms of biological role, mnh complex is a Na(+)/H(+) antiporter involved in Na(+) excretion. In Staphylococcus epidermidis (strain ATCC 35984 / DSM 28319 / BCRC 17069 / CCUG 31568 / BM 3577 / RP62A), this protein is Na(+)/H(+) antiporter subunit E1 (mnhE1).